Reading from the N-terminus, the 307-residue chain is Small ribosomal subunit biogenesis GTPase RsgA (307 aa).

Residues 82 to 240 (GRYGERIVVA…IADTPGLREV (159 aa)) form the CP-type G domain. GTP-binding positions include 131–134 (NKAD) and 182–190 (GPSGVGKSS). C264, C269, H271, and C277 together coordinate Zn(2+).

This sequence belongs to the TRAFAC class YlqF/YawG GTPase family. RsgA subfamily. Monomer. Associates with 30S ribosomal subunit, binds 16S rRNA. Requires Zn(2+) as cofactor.

Its subcellular location is the cytoplasm. One of several proteins that assist in the late maturation steps of the functional core of the 30S ribosomal subunit. Helps release RbfA from mature subunits. May play a role in the assembly of ribosomal proteins into the subunit. Circularly permuted GTPase that catalyzes slow GTP hydrolysis, GTPase activity is stimulated by the 30S ribosomal subunit. This chain is Small ribosomal subunit biogenesis GTPase RsgA, found in Gemmatimonas aurantiaca (strain DSM 14586 / JCM 11422 / NBRC 100505 / T-27).